Here is a 229-residue protein sequence, read N- to C-terminus: 7-cyano-7-deazaguanine synthase (229 aa).

14 to 24 (LSGGQDSTTCL) provides a ligand contact to ATP. Zn(2+)-binding residues include Cys-192, Cys-200, Cys-203, and Cys-206.

Belongs to the QueC family. Zn(2+) serves as cofactor.

The catalysed reaction is 7-carboxy-7-deazaguanine + NH4(+) + ATP = 7-cyano-7-deazaguanine + ADP + phosphate + H2O + H(+). It functions in the pathway purine metabolism; 7-cyano-7-deazaguanine biosynthesis. Its function is as follows. Catalyzes the ATP-dependent conversion of 7-carboxy-7-deazaguanine (CDG) to 7-cyano-7-deazaguanine (preQ(0)). In Laribacter hongkongensis (strain HLHK9), this protein is 7-cyano-7-deazaguanine synthase.